A 207-amino-acid polypeptide reads, in one-letter code: dITP/XTP pyrophosphatase (207 aa).

Residue 16 to 21 (SNNKGK) coordinates substrate. The active-site Proton acceptor is aspartate 79. Position 79 (aspartate 79) interacts with Mg(2+). Substrate is bound by residues serine 80, 166-169 (FGYD), lysine 189, and 194-195 (HR).

Belongs to the HAM1 NTPase family. Homodimer. The cofactor is Mg(2+).

The enzyme catalyses XTP + H2O = XMP + diphosphate + H(+). The catalysed reaction is dITP + H2O = dIMP + diphosphate + H(+). It carries out the reaction ITP + H2O = IMP + diphosphate + H(+). Pyrophosphatase that catalyzes the hydrolysis of nucleoside triphosphates to their monophosphate derivatives, with a high preference for the non-canonical purine nucleotides XTP (xanthosine triphosphate), dITP (deoxyinosine triphosphate) and ITP. Seems to function as a house-cleaning enzyme that removes non-canonical purine nucleotides from the nucleotide pool, thus preventing their incorporation into DNA/RNA and avoiding chromosomal lesions. The protein is dITP/XTP pyrophosphatase of Acinetobacter baumannii (strain ATCC 17978 / DSM 105126 / CIP 53.77 / LMG 1025 / NCDC KC755 / 5377).